Consider the following 160-residue polypeptide: MLPFILFSTLLPLIFTESEQQLWFCNSSDATFSYSYCDSMKFPFSITAEPCITLKGTNGFLHIKFIPRRDLKKLYFNLSINVNSIEVPTRKEIICHGYDDNYSFCKALKGETVNTVVPFSFKGILFPKGQYRCVAEAIVGDNEEKLFCLNFTIIHHPNVN.

The N-terminal stretch at 1–16 (MLPFILFSTLLPLIFT) is a signal peptide. Disulfide bonds link Cys25–Cys51, Cys37–Cys148, and Cys95–Cys105. Asn26, Asn77, and Asn101 each carry an N-linked (GlcNAc...) asparagine glycan. The segment at 119-123 (FSFKG) is interaction with lipopolysaccharide. A glycan (N-linked (GlcNAc...) asparagine) is linked at Asn150.

As to quaternary structure, heterogeneous homomer formed from homodimers; disulfide-linked. Belongs to the lipopolysaccharide (LPS) receptor, a multi-protein complex containing at least CD14, LY96 and TLR4. Binds to the extracellular domains of TLR2 and TLR4. Ligand binding induces interaction with TLR4 and oligomerization of the complex. In terms of processing, N-glycosylated.

The protein resides in the secreted. The protein localises to the extracellular space. Binds bacterial lipopolysaccharide (LPS). Cooperates with TLR4 in the innate immune response to bacterial lipopolysaccharide (LPS), and with TLR2 in the response to cell wall components from Gram-positive and Gram-negative bacteria. Enhances TLR4-dependent activation of NF-kappa-B. Cells expressing both LY96 and TLR4, but not TLR4 alone, respond to LPS. The polypeptide is Lymphocyte antigen 96 (LY96) (Cricetulus griseus (Chinese hamster)).